Here is a 508-residue protein sequence, read N- to C-terminus: Photosystem II CP47 reaction center protein (508 aa).

6 helical membrane passes run 21–36, 101–115, 140–156, 203–218, 237–252, and 457–472; these read AVHI…WAGS, IVFS…IWHW, GIHL…FGAF, IAAG…FHLS, VLSS…AFVV, and SFAL…HGAR.

This sequence belongs to the PsbB/PsbC family. PsbB subfamily. PSII is composed of 1 copy each of membrane proteins PsbA, PsbB, PsbC, PsbD, PsbE, PsbF, PsbH, PsbI, PsbJ, PsbK, PsbL, PsbM, PsbT, PsbX, PsbY, PsbZ, Psb30/Ycf12, at least 3 peripheral proteins of the oxygen-evolving complex and a large number of cofactors. It forms dimeric complexes. Binds multiple chlorophylls. PSII binds additional chlorophylls, carotenoids and specific lipids. serves as cofactor.

Its subcellular location is the plastid. The protein resides in the chloroplast thylakoid membrane. One of the components of the core complex of photosystem II (PSII). It binds chlorophyll and helps catalyze the primary light-induced photochemical processes of PSII. PSII is a light-driven water:plastoquinone oxidoreductase, using light energy to abstract electrons from H(2)O, generating O(2) and a proton gradient subsequently used for ATP formation. The sequence is that of Photosystem II CP47 reaction center protein from Daucus carota (Wild carrot).